Here is a 404-residue protein sequence, read N- to C-terminus: MSTPTYMDYSATTPVDERVAQKMMQYLTTDGNFGNPASNSHYYGWKADEAVKKARHQVADLVGADSKEIVWTSGATESDNLAIKGIAHFYHKKGNHIITLKTEHKAVLDTCRQLERENYEATYLDPMPNGLLDLNVLKKAIREDTILVSIMHVNNEIGVIQDIEAIGNLCRENKIFFHVDAAQSAGKVTIDLSKLPVDLMSFSAHKIYGPKGMGALYVRRKPRVRIEAQMHGGGHERGMRSGTLATHQIVGMGEAFAIAQAEMKEENSKIRQLRDRLLAGFVNMEEVVINGDMKNRIPGNLNISFNYVEGESLMMAVNDIAVSSGSACTSSSLEPSYVLRALGLSDELAHSSIRFTIGRYTTEAQVDKAINLVRTKVDKLRDLSPLWDMFKDGIDISKVEWTAH.

Pyridoxal 5'-phosphate is bound by residues 75–76, N155, Q183, and 203–205; these read AT and SAH. Residue K206 is modified to N6-(pyridoxal phosphate)lysine. Residue T243 participates in pyridoxal 5'-phosphate binding. The active-site Cysteine persulfide intermediate is the C328. C328 serves as a coordination point for [2Fe-2S] cluster.

The protein belongs to the class-V pyridoxal-phosphate-dependent aminotransferase family. NifS/IscS subfamily. In terms of assembly, homodimer. Forms a heterotetramer with IscU, interacts with other sulfur acceptors. Requires pyridoxal 5'-phosphate as cofactor.

The protein resides in the cytoplasm. It carries out the reaction (sulfur carrier)-H + L-cysteine = (sulfur carrier)-SH + L-alanine. It participates in cofactor biosynthesis; iron-sulfur cluster biosynthesis. Functionally, master enzyme that delivers sulfur to a number of partners involved in Fe-S cluster assembly, tRNA modification or cofactor biosynthesis. Catalyzes the removal of elemental sulfur atoms from cysteine to produce alanine. Functions as a sulfur delivery protein for Fe-S cluster synthesis onto IscU, an Fe-S scaffold assembly protein, as well as other S acceptor proteins. In Ruthia magnifica subsp. Calyptogena magnifica, this protein is Cysteine desulfurase IscS.